The chain runs to 319 residues: tRNA-modifying protein YgfZ (319 aa).

Positions 27 and 189 each coordinate folate.

This sequence belongs to the tRNA-modifying YgfZ family.

The protein resides in the cytoplasm. Functionally, folate-binding protein involved in regulating the level of ATP-DnaA and in the modification of some tRNAs. It is probably a key factor in regulatory networks that act via tRNA modification, such as initiation of chromosomal replication. This is tRNA-modifying protein YgfZ from Buchnera aphidicola subsp. Schizaphis graminum (strain Sg).